The sequence spans 313 residues: Probable cell division protein WhiA (313 aa).

Positions 276 to 309 (SLKELGEMLHPKLGKSGVNHRLRKLDEIAERIRK) form a DNA-binding region, H-T-H motif.

This sequence belongs to the WhiA family.

Its function is as follows. Involved in cell division and chromosome segregation. The polypeptide is Probable cell division protein WhiA (Ruminiclostridium cellulolyticum (strain ATCC 35319 / DSM 5812 / JCM 6584 / H10) (Clostridium cellulolyticum)).